Consider the following 227-residue polypeptide: Class I hydrophobin A (227 aa).

The signal sequence occupies residues 1 to 18; it reads MQFSLSAIVLGLAATVYA. N-linked (GlcNAc...) asparagine glycosylation occurs at asparagine 50. 3 disulfides stabilise this stretch: cysteine 60–cysteine 138, cysteine 68–cysteine 132, and cysteine 69–cysteine 109.

It belongs to the fungal hydrophobin family.

Its subcellular location is the secreted. It is found in the cell wall. Aerial growth, conidiation, and dispersal of filamentous fungi in the environment rely upon a capability of their secreting small amphipathic proteins called hydrophobins (HPBs) with low sequence identity. Class I can self-assemble into an outermost layer of rodlet bundles on aerial cell surfaces, conferring cellular hydrophobicity that supports fungal growth, development and dispersal; whereas Class II form highly ordered films at water-air interfaces through intermolecular interactions but contribute nothing to the rodlet structure. In P.expansum, hydrophobins contribute to germination, tolerance to cold stress and mycotoxins patulin and citrinin production. HfbA and HfbB are essential for fungal surface hydrophobicity and HfbA mediates air and water dispersal. The polypeptide is Class I hydrophobin A (Penicillium expansum (Blue mold rot fungus)).